The chain runs to 491 residues: Probable CtpA-like serine protease (491 aa).

Residues 1–22 form a disordered region; the sequence is MNDHQKNHATSQDDNTKSTPSK. The segment covering 8–22 has biased composition (polar residues); it reads HATSQDDNTKSTPSK. A helical membrane pass occupies residues 31-51; the sequence is LWHFILVILGIILLTSIITVV. The PDZ domain maps to 119 to 201; that stretch reads TKQFNEGVSG…TYVTLTIKRG (83 aa). Catalysis depends on charge relay system residues serine 324, aspartate 335, and lysine 349.

It belongs to the peptidase S41A family.

The protein resides in the cell membrane. The chain is Probable CtpA-like serine protease from Staphylococcus epidermidis (strain ATCC 35984 / DSM 28319 / BCRC 17069 / CCUG 31568 / BM 3577 / RP62A).